The primary structure comprises 643 residues: Sodium-dependent nutrient amino acid transporter 1 (643 aa).

The interval 1-38 (MELKGVQPSNGSPNGNGNGATNAASTEKTDAEKPTAER) is disordered. At 1–40 (MELKGVQPSNGSPNGNGNGATNAASTEKTDAEKPTAERTN) the chain is on the cytoplasmic side. Residues 8 to 26 (PSNGSPNGNGNGATNAAST) are compositionally biased toward low complexity. Residues 27-36 (EKTDAEKPTA) show a composition bias toward basic and acidic residues. 3 helical membrane passes run 41–61 (WGNGLEFLMSCISVSVGLGNV), 74–94 (GAFLIPYIIVLFLIGKPMYYL), and 111–131 (SVVPGFVGVGYGQAFGTICII). N-linked (GlcNAc...) asparagine glycans are attached at residues Asn185, Asn190, and Asn200. 9 consecutive transmembrane segments (helical) span residues 231 to 251 (PDWKLTLALFVAWVVIFLVIM), 260 to 280 (AAYFLALFPYVVLFVLLIRAV), 309 to 329 (AVVQCFFSLAVGSGPIIMFAS), 343 to 363 (IVTTLDTLTSLLGGITIFAIL), 403 to 423 (LFSVLFFFMLFVLGIGSIVAL), 449 to 469 (VCGFLMGLVYVTPGGQWILTL), 476 to 496 (TYVVFILAIFELAGIVWVYGL), 518 to 538 (CWSFFTPVMMIIIFIYSMATI), and 554 to 574 (VAGWLLFAIGAAQFPLWGLWY).

Belongs to the sodium:neurotransmitter symporter (SNF) (TC 2.A.22) family.

The protein resides in the membrane. Its function is as follows. Unusual broad substrate spectrum amino acid:sodium cotransporter that promotes absorption of the D isomers of essential amino acids. Neutral amino acids are the preferred substrates, especially methionine and phenylalanine. This is Sodium-dependent nutrient amino acid transporter 1 from Drosophila simulans (Fruit fly).